The chain runs to 353 residues: tRNA-specific 2-thiouridylase MnmA 1 (353 aa).

Residues 9–16 and M35 contribute to the ATP site; that span reads AMSGGVDS. C98 (nucleophile) is an active-site residue. Residues C98 and C194 are joined by a disulfide bond. G122 contributes to the ATP binding site. Residues 144-146 are interaction with tRNA; that stretch reads KDQ. C194 (cysteine persulfide intermediate) is an active-site residue. The interval 300–301 is interaction with tRNA; it reads RY.

This sequence belongs to the MnmA/TRMU family.

Its subcellular location is the cytoplasm. The enzyme catalyses S-sulfanyl-L-cysteinyl-[protein] + uridine(34) in tRNA + AH2 + ATP = 2-thiouridine(34) in tRNA + L-cysteinyl-[protein] + A + AMP + diphosphate + H(+). In terms of biological role, catalyzes the 2-thiolation of uridine at the wobble position (U34) of tRNA, leading to the formation of s(2)U34. This Clostridium botulinum (strain Okra / Type B1) protein is tRNA-specific 2-thiouridylase MnmA 1.